The chain runs to 850 residues: Bifunctional levopimaradiene synthase, chloroplastic (850 aa).

Residues 1 to 52 (MALPSSSLSSQIHTGATTQCIPHFHGSLNAGTSAGKRRSLYLRWGKGPSKIV) constitute a chloroplast transit peptide. Lys250 serves as a coordination point for substrate. Mg(2+)-binding residues include Asp383 and Asp385. The DXDD motif motif lies at 383–386 (DIDD). Residue Lys470 participates in substrate binding. Positions 602, 606, 746, 750, and 754 each coordinate Mg(2+). Positions 602–606 (DDLYD) match the DDXXD motif motif.

The protein belongs to the terpene synthase family. Tpsd subfamily. Requires Mg(2+) as cofactor.

It localises to the plastid. The protein resides in the chloroplast. It carries out the reaction (2E,6E,10E)-geranylgeranyl diphosphate = (+)-copalyl diphosphate. It catalyses the reaction (+)-copalyl diphosphate = abieta-7,13-diene + diphosphate. The catalysed reaction is (+)-copalyl diphosphate = abieta-8(14),12-diene + diphosphate. The enzyme catalyses (+)-copalyl diphosphate = neoabietadiene + diphosphate. Its pathway is terpene metabolism; oleoresin biosynthesis. In terms of biological role, involved in defensive oleoresin formation in conifers in response to insect attack or other injury. Involved in diterpene (C20) olefins biosynthesis. Bifunctional enzyme that catalyzes two sequential cyclizations of geranylgeranyl diphosphate (GGPP) to levopimaradiene. Levopimaradiene is the major products of the enzyme with abietadiene and neoabietadiene. No activity with farnesyl diphosphate (FPP) as substrate. The sequence is that of Bifunctional levopimaradiene synthase, chloroplastic from Pinus contorta (Shore pine).